The chain runs to 178 residues: Large ribosomal subunit protein uL6 (178 aa).

It belongs to the universal ribosomal protein uL6 family. As to quaternary structure, part of the 50S ribosomal subunit.

In terms of biological role, this protein binds to the 23S rRNA, and is important in its secondary structure. It is located near the subunit interface in the base of the L7/L12 stalk, and near the tRNA binding site of the peptidyltransferase center. This Thermoplasma volcanium (strain ATCC 51530 / DSM 4299 / JCM 9571 / NBRC 15438 / GSS1) protein is Large ribosomal subunit protein uL6.